Consider the following 261-residue polypeptide: NAD(P)H-quinone oxidoreductase subunit K, chloroplastic (261 aa).

[4Fe-4S] cluster contacts are provided by Cys-43, Cys-44, Cys-108, and Cys-139.

This sequence belongs to the complex I 20 kDa subunit family. In terms of assembly, NDH is composed of at least 16 different subunits, 5 of which are encoded in the nucleus. It depends on [4Fe-4S] cluster as a cofactor.

The protein localises to the plastid. It is found in the chloroplast thylakoid membrane. The enzyme catalyses a plastoquinone + NADH + (n+1) H(+)(in) = a plastoquinol + NAD(+) + n H(+)(out). It carries out the reaction a plastoquinone + NADPH + (n+1) H(+)(in) = a plastoquinol + NADP(+) + n H(+)(out). NDH shuttles electrons from NAD(P)H:plastoquinone, via FMN and iron-sulfur (Fe-S) centers, to quinones in the photosynthetic chain and possibly in a chloroplast respiratory chain. The immediate electron acceptor for the enzyme in this species is believed to be plastoquinone. Couples the redox reaction to proton translocation, and thus conserves the redox energy in a proton gradient. This is NAD(P)H-quinone oxidoreductase subunit K, chloroplastic from Cycas taitungensis (Prince sago).